The following is a 104-amino-acid chain: UPF0235 protein M446_3939 (104 aa).

Belongs to the UPF0235 family.

The polypeptide is UPF0235 protein M446_3939 (Methylobacterium sp. (strain 4-46)).